The following is a 133-amino-acid chain: Small ribosomal subunit protein uS8 (133 aa).

The protein belongs to the universal ribosomal protein uS8 family. In terms of assembly, part of the 30S ribosomal subunit. Contacts proteins S5 and S12.

Functionally, one of the primary rRNA binding proteins, it binds directly to 16S rRNA central domain where it helps coordinate assembly of the platform of the 30S subunit. In Deinococcus radiodurans (strain ATCC 13939 / DSM 20539 / JCM 16871 / CCUG 27074 / LMG 4051 / NBRC 15346 / NCIMB 9279 / VKM B-1422 / R1), this protein is Small ribosomal subunit protein uS8.